Consider the following 198-residue polypeptide: Recombination protein RecR (198 aa).

A C4-type zinc finger spans residues 57 to 72 (CSVCGHITDQDPCAIC). The region spanning 80-175 (SLICVVQDPK…RTTRIAHGLP (96 aa)) is the Toprim domain.

Belongs to the RecR family.

In terms of biological role, may play a role in DNA repair. It seems to be involved in an RecBC-independent recombinational process of DNA repair. It may act with RecF and RecO. This is Recombination protein RecR from Oceanobacillus iheyensis (strain DSM 14371 / CIP 107618 / JCM 11309 / KCTC 3954 / HTE831).